Here is a 236-residue protein sequence, read N- to C-terminus: Probable apoptosis inhibitor 2 (236 aa).

Residues 85–150 (RKRSFASFKW…AHAADCAFRR (66 aa)) form a BIR repeat. The Zn(2+) site is built by Cys-123, Cys-126, His-142, and Cys-146. An RING-type zinc finger spans residues 189 to 223 (CKVCFVNEKSVCFLPCRHLVVCAECSPRCKRCCVC).

The protein is Probable apoptosis inhibitor 2 (IAP2) of Orgyia pseudotsugata multicapsid polyhedrosis virus (OpMNPV).